A 270-amino-acid polypeptide reads, in one-letter code: S-adenosylmethionine decarboxylase proenzyme (270 aa).

Residue serine 117 is the Schiff-base intermediate with substrate; via pyruvic acid of the active site. Serine 117 is subject to Pyruvic acid (Ser); by autocatalysis. The active-site Proton acceptor; for processing activity is histidine 122. Cysteine 145 (proton donor; for catalytic activity) is an active-site residue.

This sequence belongs to the prokaryotic AdoMetDC family. Type 2 subfamily. As to quaternary structure, heterooctamer of four alpha and four beta chains arranged as a tetramer of alpha/beta heterodimers. It depends on pyruvate as a cofactor. In terms of processing, is synthesized initially as an inactive proenzyme. Formation of the active enzyme involves a self-maturation process in which the active site pyruvoyl group is generated from an internal serine residue via an autocatalytic post-translational modification. Two non-identical subunits are generated from the proenzyme in this reaction, and the pyruvate is formed at the N-terminus of the alpha chain, which is derived from the carboxyl end of the proenzyme. The post-translation cleavage follows an unusual pathway, termed non-hydrolytic serinolysis, in which the side chain hydroxyl group of the serine supplies its oxygen atom to form the C-terminus of the beta chain, while the remainder of the serine residue undergoes an oxidative deamination to produce ammonia and the pyruvoyl group blocking the N-terminus of the alpha chain.

It catalyses the reaction S-adenosyl-L-methionine + H(+) = S-adenosyl 3-(methylsulfanyl)propylamine + CO2. It participates in amine and polyamine biosynthesis; S-adenosylmethioninamine biosynthesis; S-adenosylmethioninamine from S-adenosyl-L-methionine: step 1/1. In terms of biological role, catalyzes the decarboxylation of S-adenosylmethionine to S-adenosylmethioninamine (dcAdoMet), the propylamine donor required for the synthesis of the polyamines spermine and spermidine from the diamine putrescine. The protein is S-adenosylmethionine decarboxylase proenzyme of Pseudoalteromonas translucida (strain TAC 125).